A 369-amino-acid chain; its full sequence is Naringenin,2-oxoglutarate 3-dioxygenase (369 aa).

The 105-residue stretch at 193–297 (CVDMDQKVVV…RLSIATFQNP (105 aa)) folds into the Fe2OG dioxygenase domain. Fe cation contacts are provided by H220, D222, and H278. Residue R288 participates in 2-oxoglutarate binding.

Belongs to the iron/ascorbate-dependent oxidoreductase family. It depends on Fe(2+) as a cofactor. Requires L-ascorbate as cofactor.

The enzyme catalyses a (2S)-flavan-4-one + 2-oxoglutarate + O2 = a (2R,3R)-dihydroflavonol + succinate + CO2. It functions in the pathway secondary metabolite biosynthesis; flavonoid biosynthesis. In terms of biological role, catalyzes the 3-beta-hydroxylation of 2S-flavanones to 2R,3R-dihydroflavonols which are intermediates in the biosynthesis of flavonols, anthocyanidins, catechins and proanthocyanidins in plants. This Petunia hybrida (Petunia) protein is Naringenin,2-oxoglutarate 3-dioxygenase (AN3).